The following is a 498-amino-acid chain: uncharacterized protein (498 aa).

ATP is bound at residue 329–336 (GNPGTGKS).

It is found in the secreted. The protein resides in the cell wall. This is an uncharacterized protein from Mycobacterium tuberculosis (strain CDC 1551 / Oshkosh).